The following is a 678-amino-acid chain: Penicillin-binding protein activator LpoA (678 aa).

The N-terminal stretch at 1 to 26 is a signal peptide; sequence MVPSTFSRLKAARCLPVVLAALIFAG. The N-palmitoyl cysteine moiety is linked to residue C27. C27 is lipidated: S-diacylglycerol cysteine. Residues 300–310 are compositionally biased toward low complexity; it reads AADVAEQPQPQ. Disordered regions lie at residues 300–340 and 496–528; these read AADV…PVSA and ALTG…DDQF. A compositionally biased stretch (polar residues) spans 311-327; that stretch reads TADSVASPAQASVSDLT. Composition is skewed to low complexity over residues 330-340 and 513-528; these read QPAAQPVPVSA and TTNN…DDQF.

Belongs to the LpoA family. In terms of assembly, interacts with PBP1a.

The protein localises to the cell outer membrane. Its function is as follows. Regulator of peptidoglycan synthesis that is essential for the function of penicillin-binding protein 1A (PBP1a). This is Penicillin-binding protein activator LpoA from Shigella flexneri serotype X (strain 2002017).